The following is a 479-amino-acid chain: Poly(A) polymerase catalytic subunit (479 aa).

Catalysis depends on residues Asp202 and Asp204. 3 residues coordinate Ca(2+): Asp202, Asp204, and Asp253.

Belongs to the poxviridae poly(A) polymerase catalytic subunit family. Heterodimer of a large (catalytic) subunit and a small (regulatory) subunit.

It catalyses the reaction RNA(n) + ATP = RNA(n)-3'-adenine ribonucleotide + diphosphate. Functionally, polymerase that creates the 3'-poly(A) tail of mRNA's. In Bos taurus (Bovine), this protein is Poly(A) polymerase catalytic subunit (OPG063).